A 292-amino-acid chain; its full sequence is 3-methyl-2-oxobutanoate hydroxymethyltransferase 2 (292 aa).

Mg(2+) is bound by residues Asp52 and Asp91. Residues 52–53 (DS), Asp91, and Lys120 each bind 3-methyl-2-oxobutanoate. Glu122 serves as a coordination point for Mg(2+). The active-site Proton acceptor is Glu189.

Belongs to the PanB family. As to quaternary structure, homodecamer; pentamer of dimers. Mg(2+) serves as cofactor.

The protein resides in the cytoplasm. The enzyme catalyses 3-methyl-2-oxobutanoate + (6R)-5,10-methylene-5,6,7,8-tetrahydrofolate + H2O = 2-dehydropantoate + (6S)-5,6,7,8-tetrahydrofolate. It participates in cofactor biosynthesis; (R)-pantothenate biosynthesis; (R)-pantoate from 3-methyl-2-oxobutanoate: step 1/2. Catalyzes the reversible reaction in which hydroxymethyl group from 5,10-methylenetetrahydrofolate is transferred onto alpha-ketoisovalerate to form ketopantoate. The chain is 3-methyl-2-oxobutanoate hydroxymethyltransferase 2 from Bradyrhizobium diazoefficiens (strain JCM 10833 / BCRC 13528 / IAM 13628 / NBRC 14792 / USDA 110).